The following is a 159-amino-acid chain: Eukaryotic translation initiation factor 5A-5 (159 aa).

Basic and acidic residues predominate over residues 1–12; sequence MSDEEHHFESKA. Residues 1–23 form a disordered region; the sequence is MSDEEHHFESKADAGASKTYPQQ. Lys-52 bears the Hypusine mark.

It belongs to the eIF-5A family. Lys-52 undergoes hypusination, a unique post-translational modification that consists in the addition of a butylamino group from spermidine to lysine side chain, leading to the formation of the unusual amino acid hypusine. eIF-5As are the only known proteins to undergo this modification, which is essential for their function.

In terms of biological role, translation factor that promotes translation elongation and termination, particularly upon ribosome stalling at specific amino acid sequence contexts. Binds between the exit (E) and peptidyl (P) site of the ribosome and promotes rescue of stalled ribosome: specifically required for efficient translation of polyproline-containing peptides as well as other motifs that stall the ribosome. Acts as a ribosome quality control (RQC) cofactor by joining the RQC complex to facilitate peptidyl transfer during CAT tailing step. The polypeptide is Eukaryotic translation initiation factor 5A-5 (EIF5A5) (Solanum tuberosum (Potato)).